The following is a 321-amino-acid chain: Lipoyl synthase (321 aa).

Residues C68, C73, C79, C94, C98, C101, and S308 each contribute to the [4Fe-4S] cluster site. Positions 80-297 constitute a Radical SAM core domain; sequence FNHGTATFMI…KVLADELGFT (218 aa).

It belongs to the radical SAM superfamily. Lipoyl synthase family. [4Fe-4S] cluster serves as cofactor.

The protein resides in the cytoplasm. The catalysed reaction is [[Fe-S] cluster scaffold protein carrying a second [4Fe-4S](2+) cluster] + N(6)-octanoyl-L-lysyl-[protein] + 2 oxidized [2Fe-2S]-[ferredoxin] + 2 S-adenosyl-L-methionine + 4 H(+) = [[Fe-S] cluster scaffold protein] + N(6)-[(R)-dihydrolipoyl]-L-lysyl-[protein] + 4 Fe(3+) + 2 hydrogen sulfide + 2 5'-deoxyadenosine + 2 L-methionine + 2 reduced [2Fe-2S]-[ferredoxin]. Its pathway is protein modification; protein lipoylation via endogenous pathway; protein N(6)-(lipoyl)lysine from octanoyl-[acyl-carrier-protein]: step 2/2. Functionally, catalyzes the radical-mediated insertion of two sulfur atoms into the C-6 and C-8 positions of the octanoyl moiety bound to the lipoyl domains of lipoate-dependent enzymes, thereby converting the octanoylated domains into lipoylated derivatives. This chain is Lipoyl synthase, found in Shewanella sp. (strain MR-7).